Reading from the N-terminus, the 196-residue chain is DnaA initiator-associating protein DiaA (196 aa).

The SIS domain maps to 34 to 196 (LVQSLLNGNK…DNTLFPHQDV (163 aa)).

It belongs to the SIS family. DiaA subfamily. In terms of assembly, homotetramer; dimer of dimers.

Functionally, required for the timely initiation of chromosomal replication via direct interactions with the DnaA initiator protein. This is DnaA initiator-associating protein DiaA from Escherichia coli O6:K15:H31 (strain 536 / UPEC).